Here is a 321-residue protein sequence, read N- to C-terminus: Phosphatidate cytidylyltransferase, mitochondrial (321 aa).

This sequence belongs to the TAM41 family. Mg(2+) is required as a cofactor. The cofactor is Co(2+). Cu(2+) serves as cofactor.

The protein resides in the mitochondrion inner membrane. The catalysed reaction is a 1,2-diacyl-sn-glycero-3-phosphate + CTP + H(+) = a CDP-1,2-diacyl-sn-glycerol + diphosphate. It functions in the pathway phospholipid metabolism; CDP-diacylglycerol biosynthesis; CDP-diacylglycerol from sn-glycerol 3-phosphate: step 3/3. Its function is as follows. Catalyzes the formation of CDP-diacylglycerol (CDP-DAG) from phosphatidic acid (PA) in the mitochondrial inner membrane. Required for the biosynthesis of the dimeric phospholipid cardiolipin, which stabilizes supercomplexes of the mitochondrial respiratory chain in the mitochondrial inner membrane. This chain is Phosphatidate cytidylyltransferase, mitochondrial, found in Caenorhabditis elegans.